The sequence spans 288 residues: Transposase InsF for insertion sequence IS3fB (288 aa).

The Integrase catalytic domain occupies 124–287 (YASGPNQKWA…SPEQFENQNL (164 aa)).

It belongs to the transposase IS3/IS150/IS904 family.

In terms of biological role, involved in the transposition of the insertion sequence IS3. This is Transposase InsF for insertion sequence IS3fB (insF7) from Escherichia coli (strain K12).